A 469-amino-acid chain; its full sequence is Probable lysophospholipase BODYGUARD 1 (469 aa).

Positions 1-45 (MGFSRSLNRTVGVFVFFILDIVDFLLCFTYKTLDFFFESEWKPCY) are cleaved as a signal peptide. Residue C46 is the site of N-palmitoyl cysteine attachment. Residues 185-439 (VVFIHGFLSS…IHVVPDKDHI (255 aa)) enclose the AB hydrolase-1 domain. The active site involves H189. S263 acts as the Nucleophile in catalysis. Residues D410 and H438 each act as charge relay system in the active site.

In terms of tissue distribution, expressed exclusively in protodermal and epidermal cells of all organs, especially on adaxial sides.

The protein localises to the cell membrane. Its subcellular location is the secreted. It is found in the cell wall. Its function is as follows. Controls cuticle development and morphogenesis, by promoting cutin and suberin monomers loading. Involved in the regulation of abscissic acid (ABA) biosynthesis in response to osmotic stress. Plays an important role in osmotic stress and drought resistance. Required to ensure a reduced permeability of aerial tissue, thus preventing transpiration. Regulates lateral root hair development. Functionally, required for infection by the pathogenic necrotrophic fungus Botrytis cinerea, probably by regulating structural traits of the cuticle. In Arabidopsis thaliana (Mouse-ear cress), this protein is Probable lysophospholipase BODYGUARD 1.